The following is a 166-amino-acid chain: Regulator of ribonuclease activity A (166 aa).

Belongs to the RraA family. As to quaternary structure, homotrimer. Binds to both RNA-binding sites in the C-terminal region of Rne and to RhlB.

It is found in the cytoplasm. Globally modulates RNA abundance by binding to RNase E (Rne) and regulating its endonucleolytic activity. Can modulate Rne action in a substrate-dependent manner by altering the composition of the degradosome. Modulates RNA-binding and helicase activities of the degradosome. The protein is Regulator of ribonuclease activity A of Pasteurella multocida (strain Pm70).